The following is a 372-amino-acid chain: Ubl carboxyl-terminal hydrolase 18 (372 aa).

The interval 19-45 (SSQSPADLEEKKEEDSNMKREQPRERP) is disordered. The span at 26 to 45 (LEEKKEEDSNMKREQPRERP) shows a compositional bias: basic and acidic residues. The interval 36–51 (MKREQPRERPRAWDYP) is mediates interaction with IFNAR2. Residues 51–112 (PHGLVGLHNI…MLLLLEKMQD (62 aa)) form a mediates interaction with STAT2 region. The USP domain maps to 55-370 (VGLHNIGQTC…TAYLLVYMKM (316 aa)). Cys64 acts as the Nucleophile in catalysis. The mediates interaction with STAT2 and necessary for the negative regulation of the type I IFN signaling pathway stretch occupies residues 303–312 (ELFAVIAHVG). The segment at 313 to 372 (MADSGHYCVYIRNAVDGKWFCFNDSNICLVSWEDIQCTYGNPNYHWQETAYLLVYMKMEC) is mediates interaction with IFNAR2. His318 acts as the Proton acceptor in catalysis.

The protein belongs to the peptidase C19 family. As to quaternary structure, interacts with STAT2; the interaction is direct. Interacts with IFNAR2; indirectly via STAT2, it negatively regulates the assembly of the ternary interferon-IFNAR1-IFNAR2 complex and inhibits type I interferon signaling. Interacts with STING1. Interacts with USP20.

It localises to the cytoplasm. Its subcellular location is the nucleus. The enzyme catalyses Thiol-dependent hydrolysis of ester, thioester, amide, peptide and isopeptide bonds formed by the C-terminal Gly of ubiquitin (a 76-residue protein attached to proteins as an intracellular targeting signal).. Its function is as follows. Interferon-induced ISG15-specific protease that plays a crucial role for maintaining a proper balance of ISG15-conjugated proteins in cells. Regulates protein ISGylation by efficiently cleaving ISG15 conjugates linked via isopeptide bonds. Regulates T-cell activation and T-helper 17 (Th17) cell differentiation by deubiquitinating TAK1, likely to keep TAK1-TAB complexes in steady conditions. In turn, restricts activation of NF-kappa-B, NFAT, and JNK as well as expression of IL2 in T-cells after TCR activation. Acts as a molecular adapter with USP20 to promote innate antiviral response through deubiquitinating STING1. Involved also in the negative regulation of the inflammatory response triggered by type I interferon. Upon recruitment by STAT2 to the type I interferon receptor subunit IFNAR2 interferes with the assembly of the ternary interferon-IFNAR1-IFNAR2 complex and acts as a negative regulator of the type I interferon signaling pathway. Functionally, has enzymatic activity similar to isoform 1 and interferes with type I interferon signaling. Major deISGylation enzyme for nuclear proteins. In Homo sapiens (Human), this protein is Ubl carboxyl-terminal hydrolase 18 (USP18).